Here is a 508-residue protein sequence, read N- to C-terminus: METLLLDGETLTLEQVRAVATGAARAALAPAARERVRRSRALVDARLEDGEAHYGINTGFGTLAEVRIPRADLERLQRNLVLSHAAGVGAPLPLPEARALVLLRANVLAKGVSGIRERTLDLLLAMLERGVVPVVPERGSVGASGDLAPLAHLALVLIGDGEAFLAPPGAAGRPERLPGGEALRRAGLEPVVLQPKEGLALVNGTQAMAAVGTLALLRAERLAALADLAGAMTLEGLLGSHRPFAPEIQAARGQPGQIAAAAHLRALLAGSELNASHQGPGCHKVQDPYSLRCMPQVHGAARDGIGFCRGVLAREVNAATDNPLVFPDTGEIVSGGNFHGQPVALALDVLAVAASHLAAISERRVEQLVNPSLSGLPPFLAPQHGLNSGFMIAQVTSAALVSENKVLCHPASVDSIPSSAGREDHVSMGMTAALKARQVVENVRTCLAIELLVAAQALDLRAPLRPAQRVAEAHARLRERVPHLSEDRALHRDIEAVSSLVDEGGLEL.

Positions 143–145 (ASG) form a cross-link, 5-imidazolinone (Ala-Gly). The residue at position 144 (S144) is a 2,3-didehydroalanine (Ser).

It belongs to the PAL/histidase family. Contains an active site 4-methylidene-imidazol-5-one (MIO), which is formed autocatalytically by cyclization and dehydration of residues Ala-Ser-Gly.

The protein localises to the cytoplasm. It catalyses the reaction L-histidine = trans-urocanate + NH4(+). It participates in amino-acid degradation; L-histidine degradation into L-glutamate; N-formimidoyl-L-glutamate from L-histidine: step 1/3. The chain is Histidine ammonia-lyase from Anaeromyxobacter sp. (strain K).